Here is a 425-residue protein sequence, read N- to C-terminus: Histidine--tRNA ligase (425 aa).

This sequence belongs to the class-II aminoacyl-tRNA synthetase family. As to quaternary structure, homodimer.

The protein resides in the cytoplasm. The catalysed reaction is tRNA(His) + L-histidine + ATP = L-histidyl-tRNA(His) + AMP + diphosphate + H(+). In Shewanella oneidensis (strain ATCC 700550 / JCM 31522 / CIP 106686 / LMG 19005 / NCIMB 14063 / MR-1), this protein is Histidine--tRNA ligase.